A 315-amino-acid polypeptide reads, in one-letter code: Lipoyl synthase (315 aa).

7 residues coordinate [4Fe-4S] cluster: Cys63, Cys68, Cys74, Cys89, Cys93, Cys96, and Ser303. Residues 75–292 enclose the Radical SAM core domain; sequence FSHGTATFMI…EKKAYDMGFR (218 aa).

The protein belongs to the radical SAM superfamily. Lipoyl synthase family. It depends on [4Fe-4S] cluster as a cofactor.

The protein resides in the cytoplasm. It catalyses the reaction [[Fe-S] cluster scaffold protein carrying a second [4Fe-4S](2+) cluster] + N(6)-octanoyl-L-lysyl-[protein] + 2 oxidized [2Fe-2S]-[ferredoxin] + 2 S-adenosyl-L-methionine + 4 H(+) = [[Fe-S] cluster scaffold protein] + N(6)-[(R)-dihydrolipoyl]-L-lysyl-[protein] + 4 Fe(3+) + 2 hydrogen sulfide + 2 5'-deoxyadenosine + 2 L-methionine + 2 reduced [2Fe-2S]-[ferredoxin]. Its pathway is protein modification; protein lipoylation via endogenous pathway; protein N(6)-(lipoyl)lysine from octanoyl-[acyl-carrier-protein]: step 2/2. Functionally, catalyzes the radical-mediated insertion of two sulfur atoms into the C-6 and C-8 positions of the octanoyl moiety bound to the lipoyl domains of lipoate-dependent enzymes, thereby converting the octanoylated domains into lipoylated derivatives. The chain is Lipoyl synthase from Laribacter hongkongensis (strain HLHK9).